The sequence spans 79 residues: Conotoxin TxMEKL-021 (79 aa).

The first 19 residues, Met1–Ala19, serve as a signal peptide directing secretion. Positions Leu20 to Arg47 are excised as a propeptide. Cystine bridges form between Cys51-Cys65, Cys58-Cys69, and Cys64-Cys75.

The protein belongs to the conotoxin O2 superfamily. As to expression, expressed by the venom duct.

Its subcellular location is the secreted. The chain is Conotoxin TxMEKL-021 from Conus textile (Cloth-of-gold cone).